A 484-amino-acid polypeptide reads, in one-letter code: uncharacterized protein (484 aa).

The next 12 helical transmembrane spans lie at Leu-19–Val-39, Val-78–Val-98, Phe-111–Leu-131, Ile-134–Leu-154, Phe-165–Ile-185, Ile-199–Gly-219, Thr-249–Phe-269, Ile-289–Leu-309, Ile-321–Leu-341, Leu-360–Leu-380, Phe-398–Leu-418, and Leu-440–Leu-460.

Its subcellular location is the cell membrane. This is an uncharacterized protein from Mesomycoplasma hyopneumoniae (strain 232) (Mycoplasma hyopneumoniae).